We begin with the raw amino-acid sequence, 337 residues long: Probable cytosolic iron-sulfur protein assembly protein 1 (337 aa).

7 WD repeats span residues 11-50 (LHND…ENLL), 57-96 (VHKK…LEEG), 109-148 (GHEN…EEYE), 155-194 (EHSQ…WECA), 199-240 (GHEG…EDDQ), 252-290 (AHRS…SEVS), and 301-337 (AHTV…NYQD).

It belongs to the WD repeat CIA1 family. Interacts with NAR1.

Its subcellular location is the cytoplasm. The protein localises to the nucleus. Its function is as follows. Essential component of the cytosolic iron-sulfur (Fe/S) protein assembly machinery. Required for the maturation of extramitochondrial Fe/S proteins. The polypeptide is Probable cytosolic iron-sulfur protein assembly protein 1 (Candida glabrata (strain ATCC 2001 / BCRC 20586 / JCM 3761 / NBRC 0622 / NRRL Y-65 / CBS 138) (Yeast)).